The chain runs to 815 residues: Sodium/hydrogen exchanger 1 (815 aa).

Topologically, residues methionine 1 to histidine 98 are extracellular. O-linked (GalNAc...) threonine glycosylation is present at threonine 42. Residues threonine 42–threonine 79 are disordered. Residue serine 56 is glycosylated (O-linked (GalNAc...) serine). Residues threonine 61, threonine 62, and threonine 68 are each glycosylated (O-linked (GalNAc...) threonine). Asparagine 75 carries an N-linked (GlcNAc...) asparagine glycan. A helical membrane pass occupies residues valine 99 to valine 121. The Cytoplasmic segment spans residues isoleucine 122–proline 130. The helical transmembrane segment at glutamate 131–glycine 148 threads the bilayer. Over valine 149–serine 158 the chain is Extracellular. Residues aspartate 159–phenylalanine 176 form a helical membrane-spanning segment. Over leucine 177–leucine 186 the chain is Cytoplasmic. The helical transmembrane segment at glycine 187–glycine 215 threads the bilayer. Residues glycine 216 to isoleucine 222 lie on the Extracellular side of the membrane. The helical transmembrane segment at glycine 223–isoleucine 249 threads the bilayer. The Cytoplasmic portion of the chain corresponds to histidine 250–asparagine 252. A helical membrane pass occupies residues glutamate 253–tyrosine 283. At glutamate 284–glycine 287 the chain is on the extracellular side. Residues isoleucine 288–phenylalanine 322 form a helical membrane-spanning segment. The Cytoplasmic portion of the chain corresponds to threonine 323–valine 328. A helical membrane pass occupies residues isoleucine 329–alanine 341. The Extracellular portion of the chain corresponds to tyrosine 342–leucine 350. Residues serine 351–isoleucine 371 form a helical membrane-spanning segment. At serine 372–histidine 373 the chain is on the cytoplasmic side. Residues lysine 374 to alanine 404 form a helical membrane-spanning segment. The Extracellular portion of the chain corresponds to glycine 405 to asparagine 410. A helical transmembrane segment spans residues tryptophan 411–lysine 438. The Cytoplasmic segment spans residues phenylalanine 439 to leucine 444. A helical transmembrane segment spans residues threonine 445–leucine 469. Residues aspartate 470–proline 475 are Extracellular-facing. The chain crosses the membrane as a helical span at residues methionine 476–leucine 505. Residues valine 503–histidine 545 are interaction with TESC. The Cytoplasmic portion of the chain corresponds to leucine 506–glutamine 815. A PI(4,5)P2-binding region region spans residues lysine 509 to arginine 516. Positions lysine 515–histidine 545 are interaction with CHP2. Residues histidine 540 to histidine 545 are confers pH-dependent PI(4,5)P2 binding. The tract at residues arginine 552–lysine 560 is PI(4,5)P2-binding region. Phosphoserine is present on residues serine 599 and serine 602. Threonine 603 is modified (phosphothreonine). Residues serine 605 and serine 648 each carry the phosphoserine modification. The interval lysine 633–glutamine 815 is interaction with TESC. An interaction with CALM1 region spans residues lysine 633–glutamine 815. An interaction with PPP3CA region spans residues leucine 684–proline 687. Phosphoserine occurs at positions 693, 697, and 703. The tract at residues proline 715–aspartate 720 is interaction with PPP3CA. Serine 723, serine 726, and serine 729 each carry phosphoserine. The segment at leucine 744–glutamine 815 is disordered. Threonine 779 carries the phosphothreonine modification. Residues proline 782–isoleucine 791 show a composition bias toward polar residues. Phosphoserine occurs at positions 785, 787, and 796.

This sequence belongs to the monovalent cation:proton antiporter 1 (CPA1) transporter (TC 2.A.36) family. In terms of assembly, homodimer; dimerization is crucial for its function. Oligomer. Interacts with CALM1 in a calcium-dependent manner. Interacts with TESC. Interacts (via the C-terminal domain) with CHP1; the interaction occurs at the plasma membrane in a calcium-dependent manner and facilitates the maturation, cell surface expression, and function of SLC9A3. Interacts with CHP2; the interaction occurs in a calcium-dependent manner. Interacts with EZR; regulates the cytoskeletal interactions of SLC9A1 and promotes stress fiber formation. In terms of processing, O-glycosylated. Ubiquitinated, leading to its degradation by the proteasome. Ubiquitination is reduced by CHP1. Post-translationally, phosphorylation at Thr-779 increases SLC9A1 activity. Specifically dephosphorylated at Thr-779 by PPP3CA that negatively regulates SLC9A1 activity. Phosphorylation at Ser-648 by AKT1 reduces SLC9A1 binding to CALM1. In terms of processing, palmitoylated; may play a major role in SLC9A1 regulation. Kidney and intestine.

The protein localises to the cell membrane. Its subcellular location is the basolateral cell membrane. The catalysed reaction is Na(+)(in) + H(+)(out) = Na(+)(out) + H(+)(in). It catalyses the reaction Li(+)(out) + H(+)(in) = Li(+)(in) + H(+)(out). The enzyme catalyses Li(+)(in) + Na(+)(out) = Li(+)(out) + Na(+)(in). With respect to regulation, activated at acidic pHs. Inhibited by amiloride and 5-amino-substituted derivatives. Inhibited by cariporide and eniporide. Phosphatidylinositol 4,5-bisphosphate (PI(4,5)P2) and phosphatidylinositol 3,4,5-trisphosphate (PI(3,4,5)P3) bind and differentially regulate SLC9A1 activity. Functionally, electroneutral Na(+) /H(+) antiporter that extrudes Na(+) in exchange for external protons driven by the inward sodium ion chemical gradient, protecting cells from acidification that occurs from metabolism. Exchanges intracellular H(+) ions for extracellular Na(+) in 1:1 stoichiometry. Plays a key role in maintening intracellular pH neutral and cell volume, and thus is important for cell growth, proliferation, migration and survival. In addition, can transport lithium Li(+) and also functions as a Na(+)/Li(+) antiporter. SLC9A1 also functions in membrane anchoring and organization of scaffolding complexes that coordinate signaling inputs. This Homo sapiens (Human) protein is Sodium/hydrogen exchanger 1.